The primary structure comprises 257 residues: BTB/POZ domain-containing protein KCTD1 (257 aa).

The tract at residues 1 to 25 is disordered; sequence MSRPLITRSPASPLNNQGIPTPAQL. Phosphoserine occurs at positions 9 and 12. Positions 9 to 25 are enriched in polar residues; the sequence is SPASPLNNQGIPTPAQL. In terms of domain architecture, BTB spans 30–100; sequence APVHIDVGGH…LRTSKLLIPD (71 aa).

As to quaternary structure, forms homopentamers. Interacts with KCTD15, probably forming heteropentamers depending on its abundance in a cell-type dependent manner. Interacts with TFAP2A, TFAP2B and TFAP2C via the BTB domain. Sumoylated.

It is found in the nucleus. Its function is as follows. May repress the transcriptional activity of AP-2 family members, including TFAP2A, TFAP2B and TFAP2C to various extent. The sequence is that of BTB/POZ domain-containing protein KCTD1 (Kctd1) from Rattus norvegicus (Rat).